The primary structure comprises 458 residues: Succinate-semialdehyde dehydrogenase [NADP(+)] 1 (458 aa).

NADP(+) is bound by residues 134–135 (WN), 158–161 (KHAS), and 210–211 (GS). Glu232 acts as the Proton acceptor in catalysis. Leu233 lines the NADP(+) pocket. The active-site Nucleophile is the Cys266. An NADP(+)-binding site is contributed by Glu363.

Belongs to the aldehyde dehydrogenase family.

The catalysed reaction is succinate semialdehyde + NADP(+) + H2O = succinate + NADPH + 2 H(+). Catalyzes the NADP(+)-dependent oxidation of succinate semialdehyde to succinate. It is believed to be the main source of succinate semialdehyde dehydrogenase activity in Mycobacterium. The polypeptide is Succinate-semialdehyde dehydrogenase [NADP(+)] 1 (gabD1) (Mycobacterium ulcerans (strain Agy99)).